Consider the following 326-residue polypeptide: Probable cell division protein WhiA (326 aa).

The H-T-H motif DNA-binding region spans 275 to 308 (SLDELGRLADPPMTKDAIAGRIRRLLAMADKRAL).

This sequence belongs to the WhiA family.

Functionally, involved in cell division and chromosome segregation. This is Probable cell division protein WhiA from Arthrobacter sp. (strain FB24).